A 349-amino-acid chain; its full sequence is Protein RecA (349 aa).

64 to 71 (GPESSGKT) serves as a coordination point for ATP.

It belongs to the RecA family.

Its subcellular location is the cytoplasm. Can catalyze the hydrolysis of ATP in the presence of single-stranded DNA, the ATP-dependent uptake of single-stranded DNA by duplex DNA, and the ATP-dependent hybridization of homologous single-stranded DNAs. It interacts with LexA causing its activation and leading to its autocatalytic cleavage. The chain is Protein RecA from Rhodopseudomonas palustris (strain ATCC BAA-98 / CGA009).